Reading from the N-terminus, the 140-residue chain is Holo-[acyl-carrier-protein] synthase (140 aa).

Residues aspartate 7 and glutamate 58 each coordinate Mg(2+).

It belongs to the P-Pant transferase superfamily. AcpS family. The cofactor is Mg(2+).

It localises to the cytoplasm. The catalysed reaction is apo-[ACP] + CoA = holo-[ACP] + adenosine 3',5'-bisphosphate + H(+). Functionally, transfers the 4'-phosphopantetheine moiety from coenzyme A to a Ser of acyl-carrier-protein. This Chloroflexus aggregans (strain MD-66 / DSM 9485) protein is Holo-[acyl-carrier-protein] synthase.